The sequence spans 267 residues: Zerumbone synthase (267 aa).

9-33 (LVTGGASGIGESIARLFIEHGAKIC) serves as a coordination point for NAD(+). Residue S142 coordinates substrate. The active-site Proton acceptor is the Y155.

This sequence belongs to the short-chain dehydrogenases/reductases (SDR) family. In terms of tissue distribution, expressed in leaves, stems and rhizomes.

The enzyme catalyses 10-hydroxy-alpha-humulene + NAD(+) = zerumbone + NADH + H(+). Its function is as follows. Catalyzes 8-hydroxy-alpha-humulene into zerumbone in presence of NAD. Also converts borneol to camphor in vitro. Zerumbone is a highly promising multi-anticancer agent. In Zingiber zerumbet (Shampoo ginger), this protein is Zerumbone synthase (ZSD1).